Reading from the N-terminus, the 430-residue chain is 4-hydroxy-3-methylbut-2-en-1-yl diphosphate synthase (flavodoxin) (430 aa).

[4Fe-4S] cluster contacts are provided by C310, C313, C356, and E363.

It belongs to the IspG family. It depends on [4Fe-4S] cluster as a cofactor.

It catalyses the reaction (2E)-4-hydroxy-3-methylbut-2-enyl diphosphate + oxidized [flavodoxin] + H2O + 2 H(+) = 2-C-methyl-D-erythritol 2,4-cyclic diphosphate + reduced [flavodoxin]. The protein operates within isoprenoid biosynthesis; isopentenyl diphosphate biosynthesis via DXP pathway; isopentenyl diphosphate from 1-deoxy-D-xylulose 5-phosphate: step 5/6. Functionally, converts 2C-methyl-D-erythritol 2,4-cyclodiphosphate (ME-2,4cPP) into 1-hydroxy-2-methyl-2-(E)-butenyl 4-diphosphate. In Nitrobacter winogradskyi (strain ATCC 25391 / DSM 10237 / CIP 104748 / NCIMB 11846 / Nb-255), this protein is 4-hydroxy-3-methylbut-2-en-1-yl diphosphate synthase (flavodoxin).